The primary structure comprises 126 residues: Large ribosomal subunit protein bL20 (126 aa).

It belongs to the bacterial ribosomal protein bL20 family.

Functionally, binds directly to 23S ribosomal RNA and is necessary for the in vitro assembly process of the 50S ribosomal subunit. It is not involved in the protein synthesizing functions of that subunit. This Frankia casuarinae (strain DSM 45818 / CECT 9043 / HFP020203 / CcI3) protein is Large ribosomal subunit protein bL20.